Consider the following 291-residue polypeptide: Sesquiterpene cyclase astC (291 aa).

This sequence belongs to the HAD-like hydrolase superfamily.

It carries out the reaction (2E,6E)-farnesyl diphosphate = (S,S)-drim-8-en-11-yl diphosphate. It functions in the pathway secondary metabolite biosynthesis; terpenoid biosynthesis. Functionally, sesquiterpene cyclase; part of the gene cluster that mediates the biosynthesis of astellolides, drimane-type sesquiterpene esters that show antimicrobial, anti-inflammatory, and anti-tumor activities. The first step in astellolide biosynthesis is performed by the sesquiterpene cyclase astC that catalyzes the formation of drimanyl pyrophosphate from farnesyl pyrophosphate. Drimanyl pyrophosphate is then dephosphorylated by the sesquiterpene phosphatase astI to produce drimanyl monophosphate which is further dephosphorylated to drim-8-ene-11-ol by atsK. Drim-8-ene-11-ol is converted to confertifolin, probably by the cytochrome P450 monooxygenase astD and/or the dehydrogenase astE. The cytochrome P450 monooxygenases astB, astF and astJ then hydroxylate confertifolin at C6, C14, or C15 to form trihydroxy confertifolin. The nonribosomal peptide synthetase astA catalyzes ester bond formation between trihydroxy contifolin and benzoic acid (BA) or 4-hydroxy benzoic acid (4HBA), leading to the formation of dideacetyl astellolides A and B, respectively. Finally, the O-acetyltransferase astG converts dideacetyl astellolides A and B into deacetyl astellolides A and B. The polypeptide is Sesquiterpene cyclase astC (Aspergillus oryzae (strain ATCC 42149 / RIB 40) (Yellow koji mold)).